Here is a 256-residue protein sequence, read N- to C-terminus: Pimeloyl-[acyl-carrier protein] methyl ester esterase (256 aa).

In terms of domain architecture, AB hydrolase-1 spans 15-242 (HLVLLHGWGL…AAHAPFISHP (228 aa)). Substrate-binding positions include Trp22, 82 to 83 (SL), and 143 to 147 (FLALQ). Residue Ser82 is the Nucleophile of the active site. Residues Asp207 and His235 contribute to the active site. Position 235 (His235) interacts with substrate.

Belongs to the AB hydrolase superfamily. Carboxylesterase BioH family. In terms of assembly, monomer.

It is found in the cytoplasm. The enzyme catalyses 6-carboxyhexanoyl-[ACP] methyl ester + H2O = 6-carboxyhexanoyl-[ACP] + methanol + H(+). It participates in cofactor biosynthesis; biotin biosynthesis. The physiological role of BioH is to remove the methyl group introduced by BioC when the pimeloyl moiety is complete. It allows to synthesize pimeloyl-ACP via the fatty acid synthetic pathway through the hydrolysis of the ester bonds of pimeloyl-ACP esters. The sequence is that of Pimeloyl-[acyl-carrier protein] methyl ester esterase from Escherichia coli O157:H7.